The primary structure comprises 95 residues: MFLQLFASKKGVGSTKNGRDSNPKYLGVKKGDGSLVTVGQIIVRQRGTKIHPGANVGRGKDDTLYALADGIVKFGRKGANRKQVSVVPIQLAVEA.

Positions 1-6 (MFLQLF) are excised as a propeptide.

This sequence belongs to the bacterial ribosomal protein bL27 family. In terms of processing, the N-terminus is cleaved by ribosomal processing cysteine protease Prp.

The polypeptide is Large ribosomal subunit protein bL27 (Symbiobacterium thermophilum (strain DSM 24528 / JCM 14929 / IAM 14863 / T)).